The following is a 607-amino-acid chain: 1-deoxy-D-xylulose-5-phosphate synthase (607 aa).

Residues His63 and 104 to 106 (GHS) each bind thiamine diphosphate. Residue Asp135 coordinates Mg(2+). Thiamine diphosphate contacts are provided by residues 136-137 (GA), Asn164, Tyr271, and Glu351. A Mg(2+)-binding site is contributed by Asn164.

Belongs to the transketolase family. DXPS subfamily. Homodimer. It depends on Mg(2+) as a cofactor. Thiamine diphosphate serves as cofactor.

It catalyses the reaction D-glyceraldehyde 3-phosphate + pyruvate + H(+) = 1-deoxy-D-xylulose 5-phosphate + CO2. It participates in metabolic intermediate biosynthesis; 1-deoxy-D-xylulose 5-phosphate biosynthesis; 1-deoxy-D-xylulose 5-phosphate from D-glyceraldehyde 3-phosphate and pyruvate: step 1/1. In terms of biological role, catalyzes the acyloin condensation reaction between C atoms 2 and 3 of pyruvate and glyceraldehyde 3-phosphate to yield 1-deoxy-D-xylulose-5-phosphate (DXP). This Campylobacter hominis (strain ATCC BAA-381 / DSM 21671 / CCUG 45161 / LMG 19568 / NCTC 13146 / CH001A) protein is 1-deoxy-D-xylulose-5-phosphate synthase.